Here is a 165-residue protein sequence, read N- to C-terminus: Phosphopantetheine adenylyltransferase (165 aa).

Residue S10 coordinates substrate. ATP is bound by residues S10–F11 and H18. Positions 42, 74, and 88 each coordinate substrate. ATP contacts are provided by residues G89–R91, E99, and Y124–S130.

The protein belongs to the bacterial CoaD family. Homohexamer. The cofactor is Mg(2+).

The protein localises to the cytoplasm. The catalysed reaction is (R)-4'-phosphopantetheine + ATP + H(+) = 3'-dephospho-CoA + diphosphate. It participates in cofactor biosynthesis; coenzyme A biosynthesis; CoA from (R)-pantothenate: step 4/5. Its function is as follows. Reversibly transfers an adenylyl group from ATP to 4'-phosphopantetheine, yielding dephospho-CoA (dPCoA) and pyrophosphate. The chain is Phosphopantetheine adenylyltransferase from Halalkalibacterium halodurans (strain ATCC BAA-125 / DSM 18197 / FERM 7344 / JCM 9153 / C-125) (Bacillus halodurans).